The following is a 426-amino-acid chain: Serine--tRNA ligase (426 aa).

227–229 (TSE) is an L-serine binding site. ATP-binding positions include 258-260 (RKE) and Val274. Residue Glu281 participates in L-serine binding. 345–348 (ELTS) contributes to the ATP binding site. Thr380 provides a ligand contact to L-serine.

Belongs to the class-II aminoacyl-tRNA synthetase family. Type-1 seryl-tRNA synthetase subfamily. As to quaternary structure, homodimer. The tRNA molecule binds across the dimer.

The protein localises to the cytoplasm. The catalysed reaction is tRNA(Ser) + L-serine + ATP = L-seryl-tRNA(Ser) + AMP + diphosphate + H(+). It carries out the reaction tRNA(Sec) + L-serine + ATP = L-seryl-tRNA(Sec) + AMP + diphosphate + H(+). It functions in the pathway aminoacyl-tRNA biosynthesis; selenocysteinyl-tRNA(Sec) biosynthesis; L-seryl-tRNA(Sec) from L-serine and tRNA(Sec): step 1/1. Its function is as follows. Catalyzes the attachment of serine to tRNA(Ser). Is also able to aminoacylate tRNA(Sec) with serine, to form the misacylated tRNA L-seryl-tRNA(Sec), which will be further converted into selenocysteinyl-tRNA(Sec). This is Serine--tRNA ligase from Clavibacter sepedonicus (Clavibacter michiganensis subsp. sepedonicus).